A 288-amino-acid polypeptide reads, in one-letter code: 33 kDa chaperonin (288 aa).

Disulfide bonds link C236–C238 and C269–C272.

It belongs to the HSP33 family. Post-translationally, under oxidizing conditions two disulfide bonds are formed involving the reactive cysteines. Under reducing conditions zinc is bound to the reactive cysteines and the protein is inactive.

Its subcellular location is the cytoplasm. Functionally, redox regulated molecular chaperone. Protects both thermally unfolding and oxidatively damaged proteins from irreversible aggregation. Plays an important role in the bacterial defense system toward oxidative stress. This Lactococcus lactis subsp. cremoris (strain MG1363) protein is 33 kDa chaperonin.